The sequence spans 205 residues: High frequency lysogenization protein HflD homolog (205 aa).

This sequence belongs to the HflD family.

The protein localises to the cytoplasm. It is found in the cell inner membrane. The polypeptide is High frequency lysogenization protein HflD homolog (Aliivibrio fischeri (strain ATCC 700601 / ES114) (Vibrio fischeri)).